Reading from the N-terminus, the 744-residue chain is NAD(P)H-quinone oxidoreductase subunit 5, chloroplastic (744 aa).

Helical transmembrane passes span 9 to 29 (WIMPFIPLPVPMLIGVGLLLF), 41 to 61 (AFPTLFLLGLVMLLSAYFFIL), 89 to 109 (VDPLTSIMSILITTVGITVLI), 125 to 145 (FSYMTLFHVSMLGLVTSSNLI), 147 to 167 (IYICWEFVGMFSYLLIGFWFT), 185 to 205 (GDFSFLLGILGLYWITGSFEF), 219 to 239 (NEIPFFFLTLCAFLLFGGALA), 258 to 278 (TPISALIHAATMVAAGIFLVA), 280 to 300 (LLPLFIVMPYILNLISFIGII), 327 to 347 (LGYMMLALGMGSYRAALFHLI), 354 to 374 (ALLFLGAGSIIHSMEAFVGYS), 396 to 416 (TSFLLGTLSLCGIPPLACFWS), 425 to 445 (WLYSPIFAIIACSTTGFTAFY), 546 to 566 (LFPMVLLVLFTLFVGAIGIPF), 600 to 620 (FIPNATLSVSLSYFGIVIASV), and 722 to 742 (LLLYFDCVLLFLFISSFLYLF).

Belongs to the complex I subunit 5 family. In terms of assembly, NDH is composed of at least 16 different subunits, 5 of which are encoded in the nucleus.

It localises to the plastid. The protein localises to the chloroplast thylakoid membrane. It catalyses the reaction a plastoquinone + NADH + (n+1) H(+)(in) = a plastoquinol + NAD(+) + n H(+)(out). It carries out the reaction a plastoquinone + NADPH + (n+1) H(+)(in) = a plastoquinol + NADP(+) + n H(+)(out). In terms of biological role, NDH shuttles electrons from NAD(P)H:plastoquinone, via FMN and iron-sulfur (Fe-S) centers, to quinones in the photosynthetic chain and possibly in a chloroplast respiratory chain. The immediate electron acceptor for the enzyme in this species is believed to be plastoquinone. Couples the redox reaction to proton translocation, and thus conserves the redox energy in a proton gradient. The polypeptide is NAD(P)H-quinone oxidoreductase subunit 5, chloroplastic (ndhF) (Pelargonium hortorum (Common geranium)).